The following is a 177-amino-acid chain: MHATTIVTVRKGNKVVIAGDGQVSLGQTIMKGNARKVRRIGKGGNVIAGFAGATADAFTLLERLEAKLEQYPDQLTRACVELAKDWRTDRYLRRLEAMMLVADKSVSLALTGTGDVLEPEHGVMAIGSGGNYALAAARALMDTDKDAEEIARKAMQIASDICVYTNNNFVVETLDAA.

Residue threonine 4 is part of the active site. Na(+)-binding residues include serine 159, cysteine 162, and threonine 165.

This sequence belongs to the peptidase T1B family. HslV subfamily. As to quaternary structure, a double ring-shaped homohexamer of HslV is capped on each side by a ring-shaped HslU homohexamer. The assembly of the HslU/HslV complex is dependent on binding of ATP.

Its subcellular location is the cytoplasm. It catalyses the reaction ATP-dependent cleavage of peptide bonds with broad specificity.. Its activity is regulated as follows. Allosterically activated by HslU binding. In terms of biological role, protease subunit of a proteasome-like degradation complex believed to be a general protein degrading machinery. The sequence is that of ATP-dependent protease subunit HslV from Mesorhizobium japonicum (strain LMG 29417 / CECT 9101 / MAFF 303099) (Mesorhizobium loti (strain MAFF 303099)).